The primary structure comprises 439 residues: Serine--tRNA ligase (439 aa).

237–239 (TAE) is a binding site for L-serine. 268–270 (RAE) is a binding site for ATP. Residue Glu-291 coordinates L-serine. ATP is bound at residue 362–365 (EISS). Ser-397 lines the L-serine pocket.

This sequence belongs to the class-II aminoacyl-tRNA synthetase family. Type-1 seryl-tRNA synthetase subfamily. In terms of assembly, homodimer. The tRNA molecule binds across the dimer.

It is found in the cytoplasm. The catalysed reaction is tRNA(Ser) + L-serine + ATP = L-seryl-tRNA(Ser) + AMP + diphosphate + H(+). It catalyses the reaction tRNA(Sec) + L-serine + ATP = L-seryl-tRNA(Sec) + AMP + diphosphate + H(+). It functions in the pathway aminoacyl-tRNA biosynthesis; selenocysteinyl-tRNA(Sec) biosynthesis; L-seryl-tRNA(Sec) from L-serine and tRNA(Sec): step 1/1. In terms of biological role, catalyzes the attachment of serine to tRNA(Ser). Is also able to aminoacylate tRNA(Sec) with serine, to form the misacylated tRNA L-seryl-tRNA(Sec), which will be further converted into selenocysteinyl-tRNA(Sec). This is Serine--tRNA ligase from Afipia carboxidovorans (strain ATCC 49405 / DSM 1227 / KCTC 32145 / OM5) (Oligotropha carboxidovorans).